Here is a 332-residue protein sequence, read N- to C-terminus: MRPILLSGHERALTQVKYNGDGDIIFSVSKDHVDADSHNGERIGTYHGHQGALWTVDVNPDSTLLATGGADNTLRLWEVQTGKLLHTWEFNTSIKRCEFSPDGRQLLGVTEKRSGHLSTIVVYEINPDPEAKQSDEQVLRIVCDESKATVAGFSYLAKYIISGHEDGSVTQWDGKTGELLSSNYDVHEPDMQGYALATKHVRFDANRVQLVDVEDLTVLKSYVTDTPLNSAAITPVKDYVILGGGQAAMDVTTTSARQGKFEARFYHKIFMEEIGRVRGHFGPLNYVAVHPQGTGYCSGGEDGYVRVHHFDKPYFDFMYEVEREAAREQANL.

WD repeat units lie at residues 8 to 47 (GHERALTQVKYNGDGDIIFSVSKDHVDADSHNGERIGTYH), 48 to 87 (GHQGALWTVDVNPDSTLLATGGADNTLRLWEVQTGKLLHT), 144 to 182 (DESKATVAGFSYLAKYIISGHEDGSVTQWDGKTGELLSS), and 279 to 318 (GHFGPLNYVAVHPQGTGYCSGGEDGYVRVHHFDKPYFDFM).

The protein belongs to the eIF-3 subunit I family. In terms of assembly, component of the eukaryotic translation initiation factor 3 (eIF-3) complex.

The protein resides in the cytoplasm. Functionally, component of the eukaryotic translation initiation factor 3 (eIF-3) complex, which is involved in protein synthesis of a specialized repertoire of mRNAs and, together with other initiation factors, stimulates binding of mRNA and methionyl-tRNAi to the 40S ribosome. The eIF-3 complex specifically targets and initiates translation of a subset of mRNAs involved in cell proliferation. This chain is Eukaryotic translation initiation factor 3 subunit I, found in Phaeosphaeria nodorum (strain SN15 / ATCC MYA-4574 / FGSC 10173) (Glume blotch fungus).